The sequence spans 264 residues: Hydroxyethylthiazole kinase (264 aa).

Met-52 lines the substrate pocket. Residues Arg-127 and Thr-173 each coordinate ATP. Gly-200 is a binding site for substrate.

Belongs to the Thz kinase family. Mg(2+) serves as cofactor.

The enzyme catalyses 5-(2-hydroxyethyl)-4-methylthiazole + ATP = 4-methyl-5-(2-phosphooxyethyl)-thiazole + ADP + H(+). It participates in cofactor biosynthesis; thiamine diphosphate biosynthesis; 4-methyl-5-(2-phosphoethyl)-thiazole from 5-(2-hydroxyethyl)-4-methylthiazole: step 1/1. In terms of biological role, catalyzes the phosphorylation of the hydroxyl group of 4-methyl-5-beta-hydroxyethylthiazole (THZ). The polypeptide is Hydroxyethylthiazole kinase (Pectobacterium atrosepticum (strain SCRI 1043 / ATCC BAA-672) (Erwinia carotovora subsp. atroseptica)).